Reading from the N-terminus, the 563-residue chain is Proline--tRNA ligase (563 aa).

This sequence belongs to the class-II aminoacyl-tRNA synthetase family. ProS type 1 subfamily. Homodimer.

It localises to the cytoplasm. The catalysed reaction is tRNA(Pro) + L-proline + ATP = L-prolyl-tRNA(Pro) + AMP + diphosphate. Functionally, catalyzes the attachment of proline to tRNA(Pro) in a two-step reaction: proline is first activated by ATP to form Pro-AMP and then transferred to the acceptor end of tRNA(Pro). As ProRS can inadvertently accommodate and process non-cognate amino acids such as alanine and cysteine, to avoid such errors it has two additional distinct editing activities against alanine. One activity is designated as 'pretransfer' editing and involves the tRNA(Pro)-independent hydrolysis of activated Ala-AMP. The other activity is designated 'posttransfer' editing and involves deacylation of mischarged Ala-tRNA(Pro). The misacylated Cys-tRNA(Pro) is not edited by ProRS. This Persephonella marina (strain DSM 14350 / EX-H1) protein is Proline--tRNA ligase.